Reading from the N-terminus, the 499-residue chain is Zinc finger protein PLAG1 (499 aa).

The disordered stretch occupies residues 1–33 (MATVIPGDLSEVRDTQKAPSGKRKRGESKPRKN). The interaction with KPNA2 stretch occupies residues 2–84 (ATVIPGDLSE…SKYKLQRHMA (83 aa)). The Nuclear localization signal signature appears at 22–25 (KRKR). 7 C2H2-type zinc fingers span residues 34-56 (FPCQ…SFSH), 62-86 (YKCT…MATH), 92-114 (HKCN…LHTH), 121-143 (FKCE…LALH), 150-172 (LTCK…LKSH), 185-207 (HQCE…MVVH), and 213-236 (FLCQ…KKSH). The decreased nuclear import with localization in the nucleus but also in the cytoplasm stretch occupies residues 41-242 (KAFNSVEKLK…KKSHNQELLK (202 aa)). The tract at residues 243 to 383 (VKTEPVDFLD…SPASSSKLGL (141 aa)) is repression domain; contains 3 sumoylation motifs and massively decrease transcription activity. The activates transcription; Inhibition of nuclear import due to lack of NLS and KPNA2 interaction stretch occupies residues 243–499 (VKTEPVDFLD…TLPRFHQAFQ (257 aa)). Residues K244 and K263 each participate in a glycyl lysine isopeptide (Lys-Gly) (interchain with G-Cter in SUMO) cross-link. A compositionally biased stretch (low complexity) spans 365-379 (GGAPSSSQDSPASSS). The tract at residues 365–400 (GGAPSSSQDSPASSSKLGLEPQSGSPDDGAGDLSLS) is disordered. The segment at 384 to 499 (EPQSGSPDDG…TLPRFHQAFQ (116 aa)) is massively activates transcription.

It belongs to the krueppel C2H2-type zinc-finger protein family. As to quaternary structure, interacts with KPNA2, which escorts protein to the nucleus via interaction with nuclear localization signal. Interacts with E3 SUMO-protein ligase PIAS1, PIAS2 and PIAS4. In terms of processing, sumoylated with SUMO1; which inhibits transcriptional activity, but does not affect nuclear localization. Blockers of sumoylation pathway such as SENP3 and inactive UBE2I increases transcriptional capacity. Sumoylation is increased in the presence of PIAS1. Acetylated by lysine acetyltransferase EP300; which activates transcriptional capacity. Lysine residues that are sumoylated also seem to be target for acetylation. Expressed in heart, spleen, lung, kidney, brain, testis and epididymis but not in salivary glands.

It localises to the nucleus. Its function is as follows. Transcription factor whose activation results in up-regulation of target genes, such as IGFII, leading to uncontrolled cell proliferation: when overexpressed in cultured cells, higher proliferation rate and transformation are observed. Other target genes such as CRLF1, CRABP2, CRIP2, PIGF are strongly induced in cells with PLAG1 induction. Proto-oncogene whose ectopic expression can trigger the development of pleomorphic adenomas of the salivary gland and lipoblastomas. Cooperates with CBFB-MYH11. The polypeptide is Zinc finger protein PLAG1 (Plag1) (Mus musculus (Mouse)).